A 230-amino-acid chain; its full sequence is 3,4-dihydroxy-2-butanone 4-phosphate synthase (230 aa).

Residues 38–39 (RE), Asp43, 151–155 (RRGHT), and Glu175 contribute to the D-ribulose 5-phosphate site. Position 39 (Glu39) interacts with Mg(2+). His154 serves as a coordination point for Mg(2+).

Belongs to the DHBP synthase family. Homodimer. The cofactor is Mg(2+). Requires Mn(2+) as cofactor.

It carries out the reaction D-ribulose 5-phosphate = (2S)-2-hydroxy-3-oxobutyl phosphate + formate + H(+). It participates in cofactor biosynthesis; riboflavin biosynthesis; 2-hydroxy-3-oxobutyl phosphate from D-ribulose 5-phosphate: step 1/1. Functionally, catalyzes the conversion of D-ribulose 5-phosphate to formate and 3,4-dihydroxy-2-butanone 4-phosphate. In Vibrio harveyi (Beneckea harveyi), this protein is 3,4-dihydroxy-2-butanone 4-phosphate synthase.